The primary structure comprises 255 residues: 5'-nucleotidase SurE (255 aa).

A divalent metal cation is bound by residues D8, D9, S40, and N93.

It belongs to the SurE nucleotidase family. The cofactor is a divalent metal cation.

Its subcellular location is the cytoplasm. It catalyses the reaction a ribonucleoside 5'-phosphate + H2O = a ribonucleoside + phosphate. Its function is as follows. Nucleotidase that shows phosphatase activity on nucleoside 5'-monophosphates. This Rhodopseudomonas palustris (strain ATCC BAA-98 / CGA009) protein is 5'-nucleotidase SurE.